Reading from the N-terminus, the 323-residue chain is Homoserine kinase (323 aa).

97–107 contacts ATP; it reads PHGRGMGSSGA.

The protein belongs to the GHMP kinase family. Homoserine kinase subfamily.

It localises to the cytoplasm. It catalyses the reaction L-homoserine + ATP = O-phospho-L-homoserine + ADP + H(+). Its pathway is amino-acid biosynthesis; L-threonine biosynthesis; L-threonine from L-aspartate: step 4/5. Functionally, catalyzes the ATP-dependent phosphorylation of L-homoserine to L-homoserine phosphate. The chain is Homoserine kinase from Leifsonia xyli subsp. xyli (strain CTCB07).